The following is a 1008-amino-acid chain: PAN2-PAN3 deadenylation complex catalytic subunit PAN2 (1008 aa).

WD repeat units lie at residues 29–68, 110–149, 158–198, 200–236, and 277–316; these read GQLTDTLPLTFDLAEDLVWAGDTNGIVSSYYGETLQPYSR, PSLGNNLCMTFTHGPTEFVVGGNPGKLVVVNSERGDVTRV, HMAG…FSDV, VQDNVVMTCGFSAASTGHRIDPLIKVWDLRMMRAMAP, and AEVALVNGVKLSPRGHHFVVSDTSGQLQLWSDEPQSSFAE. The segment at 314-449 is linker; sequence FAEFSAPTAF…TCTEASMSSK (136 aa). The region spanning 450–755 is the USP domain; that stretch reads KVPRLYRKLE…RTVMMVYAVG (306 aa). An Exonuclease domain is found at 808 to 976; the sequence is AIDAEFVVLK…EDSHTALLLY (169 aa). Residues aspartate 810, glutamate 812, aspartate 915, and aspartate 968 each contribute to the a divalent metal cation site.

Belongs to the peptidase C19 family. PAN2 subfamily. As to quaternary structure, forms a heterotrimer with an asymmetric homodimer of the regulatory subunit PAN3 to form the poly(A)-nuclease (PAN) deadenylation complex. A divalent metal cation serves as cofactor.

It is found in the cytoplasm. It catalyses the reaction Exonucleolytic cleavage of poly(A) to 5'-AMP.. With respect to regulation, positively regulated by the regulatory subunit PAN3. Its function is as follows. Catalytic subunit of the poly(A)-nuclease (PAN) deadenylation complex, one of two cytoplasmic mRNA deadenylases involved in mRNA turnover. PAN specifically shortens poly(A) tails of RNA and the activity is stimulated by poly(A)-binding protein PAB1. PAN deadenylation is followed by rapid degradation of the shortened mRNA tails by the CCR4-NOT complex. Deadenylated mRNAs are then degraded by two alternative mechanisms, namely exosome-mediated 3'-5' exonucleolytic degradation, or deadenylation-dependent mRNA decaping and subsequent 5'-3' exonucleolytic degradation by XRN1. May also be involved in post-transcriptional maturation of mRNA poly(A) tails. The chain is PAN2-PAN3 deadenylation complex catalytic subunit PAN2 from Yarrowia lipolytica (strain CLIB 122 / E 150) (Yeast).